The following is a 120-amino-acid chain: NAD(P)H-quinone oxidoreductase subunit 3, chloroplastic (120 aa).

3 helical membrane-spanning segments follow: residues 7 to 27, 64 to 84, and 89 to 109; these read YQTF…ALLI, SFAL…PWAM, and LGIF…IGLV.

It belongs to the complex I subunit 3 family. In terms of assembly, NDH is composed of at least 16 different subunits, 5 of which are encoded in the nucleus.

It localises to the plastid. The protein localises to the chloroplast thylakoid membrane. The enzyme catalyses a plastoquinone + NADH + (n+1) H(+)(in) = a plastoquinol + NAD(+) + n H(+)(out). It carries out the reaction a plastoquinone + NADPH + (n+1) H(+)(in) = a plastoquinol + NADP(+) + n H(+)(out). NDH shuttles electrons from NAD(P)H:plastoquinone, via FMN and iron-sulfur (Fe-S) centers, to quinones in the photosynthetic chain and possibly in a chloroplast respiratory chain. The immediate electron acceptor for the enzyme in this species is believed to be plastoquinone. Couples the redox reaction to proton translocation, and thus conserves the redox energy in a proton gradient. This is NAD(P)H-quinone oxidoreductase subunit 3, chloroplastic from Psilotum nudum (Whisk fern).